We begin with the raw amino-acid sequence, 87 residues long: uncharacterized protein (87 aa).

2 consecutive transmembrane segments (helical) span residues 8–28 (IVVL…IFDL) and 47–67 (LAGS…LIGL).

The protein resides in the cell membrane. This is an uncharacterized protein from Bacillus subtilis (strain 168).